The following is a 293-amino-acid chain: Cytidine deaminase 8 (293 aa).

2 consecutive CMP/dCMP-type deaminase domains span residues 20 to 151 and 181 to 293; these read FTPQ…LISQ and EHCN…LHCK. 61-63 provides a ligand contact to substrate; the sequence is NVE. H74 serves as a coordination point for Zn(2+). E76 (proton donor) is an active-site residue. Zn(2+) is bound by residues C107 and C110.

Belongs to the cytidine and deoxycytidylate deaminase family. Homodimer. It depends on Zn(2+) as a cofactor.

It carries out the reaction cytidine + H2O + H(+) = uridine + NH4(+). The catalysed reaction is 2'-deoxycytidine + H2O + H(+) = 2'-deoxyuridine + NH4(+). In terms of biological role, this enzyme scavenges exogenous and endogenous cytidine and 2'-deoxycytidine for UMP synthesis. In Arabidopsis thaliana (Mouse-ear cress), this protein is Cytidine deaminase 8 (CDA8).